Reading from the N-terminus, the 306-residue chain is Embryogenic cell protein 40 (306 aa).

Disordered regions lie at residues 1 to 57, 80 to 171, and 188 to 306; these read MADL…ASHG, AATH…GGLG, and GTGI…PTSH. Positions 12-23 are enriched in polar residues; it reads IQLTDQHGNPVQ. Low complexity predominate over residues 32–44; the sequence is VHITGVATTGATT. Composition is skewed to gly residues over residues 85 to 119, 127 to 151, and 159 to 171; these read GSHG…GTGT, GPTG…GTGV, and GPTG…GGLG. Over residues 194–204 the composition is skewed to low complexity; it reads GSAPASAGSHS. 2 stretches are compositionally biased toward basic and acidic residues: residues 205-218 and 243-259; these read HAPE…EQLH and KIKE…DEHT. Low complexity predominate over residues 260–278; the sequence is TVATTKTTTAAHPGGAAVA. The span at 279 to 298 shows a compositional bias: basic and acidic residues; sequence VEHHEHEKKSMLDKIKDKLP.

Belongs to the plant dehydrin family.

The chain is Embryogenic cell protein 40 (ECP40) from Daucus carota (Wild carrot).